Reading from the N-terminus, the 343-residue chain is UDP-3-O-acylglucosamine N-acyltransferase (343 aa).

Residue H236 is the Proton acceptor of the active site.

This sequence belongs to the transferase hexapeptide repeat family. LpxD subfamily. As to quaternary structure, homotrimer.

It carries out the reaction a UDP-3-O-[(3R)-3-hydroxyacyl]-alpha-D-glucosamine + a (3R)-hydroxyacyl-[ACP] = a UDP-2-N,3-O-bis[(3R)-3-hydroxyacyl]-alpha-D-glucosamine + holo-[ACP] + H(+). It participates in bacterial outer membrane biogenesis; LPS lipid A biosynthesis. Catalyzes the N-acylation of UDP-3-O-acylglucosamine using 3-hydroxyacyl-ACP as the acyl donor. Is involved in the biosynthesis of lipid A, a phosphorylated glycolipid that anchors the lipopolysaccharide to the outer membrane of the cell. The chain is UDP-3-O-acylglucosamine N-acyltransferase from Syntrophotalea carbinolica (strain DSM 2380 / NBRC 103641 / GraBd1) (Pelobacter carbinolicus).